Consider the following 214-residue polypeptide: Osteoclast-stimulating factor 1 (214 aa).

Positions 12–71 (GQVKVFRALFTFDPRTPDELYFEEGDILYISDTSDTNWWKGTCRGRTGLIPSNYVAEQAE) constitute an SH3 domain. ANK repeat units lie at residues 72–101 (TIDHPMHEAAKRGNLSWLRECVENKVGING), 105–135 (AGNTALYWACHGGHKDVVELLLNQPSVELNQ), and 139–168 (LGDTVLHAAAWKGYSDIVEMLLDKNARTDI).

Ubiquitously expressed.

It is found in the cytoplasm. In terms of biological role, induces bone resorption, acting probably through a signaling cascade which results in the secretion of factor(s) enhancing osteoclast formation and activity. The sequence is that of Osteoclast-stimulating factor 1 (ostf1) from Monopterus albus (Swamp eel).